The primary structure comprises 421 residues: Protein PHLOEM UNLOADING MODULATOR (421 aa).

The next 7 helical transmembrane spans lie at 30-50, 60-80, 124-144, 158-178, 286-306, 323-343, and 397-417; these read LMPV…LFYK, IPFL…ALCV, HIIG…SVVF, YIFT…STIL, AMAW…LFVA, CIVA…IWSA, and TVFA…ALTL.

It belongs to the sphingomyelin synthase family.

The protein resides in the membrane. It participates in sphingolipid metabolism. Functionally, catalyzes the biosynthesis of sphingolipids with very long-chain fatty acid (VLCFA). Required for the formation of plasmodesmal cytoplasmic sleeve during the transition from type I to type II plasmodesmata to modulate post-sieve elements (SE) unloading and symplastic cell-to-cell molecular trafficking at the phloem pole pericycle (PPP)-endodermis interface in roots. This Arabidopsis thaliana (Mouse-ear cress) protein is Protein PHLOEM UNLOADING MODULATOR.